The primary structure comprises 917 residues: Chitin synthase 1 (917 aa).

Residues 1–11 (MAYHGRGDGYD) show a composition bias toward basic and acidic residues. Residues 1 to 56 (MAYHGRGDGYDGHQLQDLPGGHNQGDQHDDAQAPFLSENPMPYDNDRLGTDTPPVR) form a disordered region. Topologically, residues 1–570 (MAYHGRGDGY…YKSGHNIVRM (570 aa)) are extracellular. An N-linked (GlcNAc...) asparagine glycan is attached at asparagine 544. A helical transmembrane segment spans residues 571–591 (FFFHVQLIYNIANVIFTWFSL). Topologically, residues 592–629 (ASYWLTTTVIMDLVGTPVTASSSSAEHHGWPFGDTVTP) are cytoplasmic. The helical transmembrane segment at 630 to 650 (FFNAVLKYIYLAFVILQFILA) threads the bilayer. Over 651 to 664 (LGNRPKGSKWTYIT) the chain is Extracellular. Residues 665–685 (SFFVFSLIQSYILVLSGYLVA) traverse the membrane as a helical segment. The Cytoplasmic portion of the chain corresponds to 686-716 (RAFSVPLDQQLQLDNAKDAMASLFGGSGSAG). Residues 717–737 (VILVALVTIYGLYFLASFMYL) form a helical membrane-spanning segment. Residues 738–744 (DPWHMFH) lie on the Extracellular side of the membrane. A helical membrane pass occupies residues 745-765 (SFPYYMLLMSTYINILMIYAF). Topologically, residues 766 to 843 (NNWHDVSWGT…DLEDSYKSFR (78 aa)) are cytoplasmic. A helical transmembrane segment spans residues 844–864 (TMLVVSWLFSNCLLAVVITSD). Residues 865–884 (NFNTFGIGQTASARTAWFFK) lie on the Extracellular side of the membrane. A helical transmembrane segment spans residues 885-905 (FLLFATGALSVIRFIGFCWFL). At 906–917 (GRTGIMCCFARR) the chain is on the cytoplasmic side.

It belongs to the chitin synthase family. Class III subfamily.

The protein localises to the cell membrane. It carries out the reaction [(1-&gt;4)-N-acetyl-beta-D-glucosaminyl](n) + UDP-N-acetyl-alpha-D-glucosamine = [(1-&gt;4)-N-acetyl-beta-D-glucosaminyl](n+1) + UDP + H(+). In terms of biological role, polymerizes chitin, a structural polymer of the cell wall and septum, by transferring the sugar moiety of UDP-GlcNAc to the non-reducing end of the growing chitin polymer. The protein is Chitin synthase 1 (chs-1) of Neurospora crassa (strain ATCC 24698 / 74-OR23-1A / CBS 708.71 / DSM 1257 / FGSC 987).